We begin with the raw amino-acid sequence, 268 residues long: Tropinone reductase homolog At2g29370 (268 aa).

Position 22-46 (22-46 (LVTGGSKGLGKAVVEELAMLGARVH)) interacts with NADP(+). Serine 155 contributes to the substrate binding site. Tyrosine 168 functions as the Proton acceptor in the catalytic mechanism.

This sequence belongs to the short-chain dehydrogenases/reductases (SDR) family. SDR65C subfamily.

The protein is Tropinone reductase homolog At2g29370 of Arabidopsis thaliana (Mouse-ear cress).